We begin with the raw amino-acid sequence, 104 residues long: Large ribosomal subunit protein uL24 (104 aa).

Belongs to the universal ribosomal protein uL24 family. Part of the 50S ribosomal subunit.

In terms of biological role, one of two assembly initiator proteins, it binds directly to the 5'-end of the 23S rRNA, where it nucleates assembly of the 50S subunit. One of the proteins that surrounds the polypeptide exit tunnel on the outside of the subunit. The protein is Large ribosomal subunit protein uL24 of Shewanella pealeana (strain ATCC 700345 / ANG-SQ1).